The primary structure comprises 216 residues: ATP-dependent dethiobiotin synthetase BioD (216 aa).

13–18 (EVGKTY) is a binding site for ATP. Thr-17 contacts Mg(2+). Residue Lys-38 is part of the active site. A substrate-binding site is contributed by Thr-42. Residues Asp-47 and 112–115 (EGVG) each bind ATP. Positions 47 and 112 each coordinate Mg(2+).

It belongs to the dethiobiotin synthetase family. In terms of assembly, homodimer. It depends on Mg(2+) as a cofactor.

Its subcellular location is the cytoplasm. It carries out the reaction (7R,8S)-7,8-diammoniononanoate + CO2 + ATP = (4R,5S)-dethiobiotin + ADP + phosphate + 3 H(+). Its pathway is cofactor biosynthesis; biotin biosynthesis; biotin from 7,8-diaminononanoate: step 1/2. In terms of biological role, catalyzes a mechanistically unusual reaction, the ATP-dependent insertion of CO2 between the N7 and N8 nitrogen atoms of 7,8-diaminopelargonic acid (DAPA, also called 7,8-diammoniononanoate) to form a ureido ring. The sequence is that of ATP-dependent dethiobiotin synthetase BioD from Endomicrobium trichonymphae.